The sequence spans 195 residues: dTDP-4-dehydrorhamnose 3,5-epimerase (195 aa).

Substrate contacts are provided by residues R31, E36, 54 to 56 (QDN), and R67. The active-site Proton acceptor is the H70. K80 and H127 together coordinate substrate. Y140 serves as the catalytic Proton donor. Residues D151 and K176 each contribute to the substrate site.

It belongs to the dTDP-4-dehydrorhamnose 3,5-epimerase family. In terms of assembly, homodimer.

The catalysed reaction is dTDP-4-dehydro-6-deoxy-alpha-D-glucose = dTDP-4-dehydro-beta-L-rhamnose. Its pathway is carbohydrate biosynthesis; dTDP-L-rhamnose biosynthesis. Functionally, catalyzes the epimerization of the C3' and C5'positions of dTDP-6-deoxy-D-xylo-4-hexulose, forming dTDP-6-deoxy-L-lyxo-4-hexulose. The sequence is that of dTDP-4-dehydrorhamnose 3,5-epimerase from Sinorhizobium fredii (strain NBRC 101917 / NGR234).